The following is a 348-amino-acid chain: Rhodopsin (348 aa).

Residues 1–33 lie on the Extracellular side of the membrane; sequence TEGPFFYIPMVNTSGVVRSPYEYPQYYLVNPAA. Asn-12 is a glycosylation site (N-linked (GlcNAc...) asparagine). The chain crosses the membrane as a helical span at residues 34–58; sequence YAILGAYMFFLIIIGFPVNFMTLYV. Over 59-70 the chain is Cytoplasmic; it reads TLEHKKLRTPLN. A helical transmembrane segment spans residues 71–93; it reads YILLNLAVADLFMVIGGFTTTMY. Topologically, residues 94–107 are extracellular; sequence SSMHGYFVLGRLGC. A disulfide bridge connects residues Cys-107 and Cys-184. Residues 108–130 traverse the membrane as a helical segment; that stretch reads NMEGFSATLGGMISLWSLAVLAI. The 'Ionic lock' involved in activated form stabilization motif lies at 131–133; sequence ERW. At 131–149 the chain is on the cytoplasmic side; the sequence is ERWVVVCKPISNFRFGENH. The chain crosses the membrane as a helical span at residues 150–170; the sequence is AIMGVSLTWFMALACTVPPLV. Topologically, residues 171 to 199 are extracellular; it reads GWSRYIPEGMQCSCGIDYYTRAEGFNNES. An N-linked (GlcNAc...) asparagine glycan is attached at Asn-197. The chain crosses the membrane as a helical span at residues 200-221; it reads FVLYMFFCHFLVPLVIIFFCYG. Topologically, residues 222–249 are cytoplasmic; that stretch reads RLLCAVKEAAAAQQESETTQRAEREVTR. Residues 250 to 271 form a helical membrane-spanning segment; that stretch reads MVIIMVIGFLVCWLPYASVAWF. The Extracellular portion of the chain corresponds to 272–283; the sequence is IFTHQGSEFGPL. The helical transmembrane segment at 284–305 threads the bilayer; it reads FMTIPAFFAKSSSIYNPMIYIC. Residue Lys-293 is modified to N6-(retinylidene)lysine. Over 306 to 348 the chain is Cytoplasmic; it reads MNKQFRNCMITTLFCGKNPFEGEEEGASSTKTEASSASSVSPA. Residue Cys-320 is the site of S-palmitoyl cysteine attachment. Residues 327 to 348 form a disordered region; sequence GEEEGASSTKTEASSASSVSPA. Low complexity predominate over residues 332-348; sequence ASSTKTEASSASSVSPA.

This sequence belongs to the G-protein coupled receptor 1 family. Opsin subfamily. Phosphorylated on some or all of the serine and threonine residues present in the C-terminal region. In terms of processing, contains one covalently linked retinal chromophore.

The protein resides in the membrane. It localises to the cell projection. It is found in the cilium. The protein localises to the photoreceptor outer segment. In terms of biological role, photoreceptor required for image-forming vision at low light intensity. While most salt water fish species use retinal as chromophore, most freshwater fish use 3-dehydroretinal, or a mixture of retinal and 3-dehydroretinal. Light-induced isomerization of 11-cis to all-trans retinal triggers a conformational change that activates signaling via G-proteins. Subsequent receptor phosphorylation mediates displacement of the bound G-protein alpha subunit by arrestin and terminates signaling. This is Rhodopsin (rho) from Sargocentron punctatissimum (Speckled squirrelfish).